The sequence spans 535 residues: EH domain-containing protein 3 (535 aa).

Met-1 carries the post-translational modification N-acetylmethionine. A Dynamin-type G domain is found at 55–286 (FDNKPMVLLV…DLFKDIQSLP (232 aa)). Residues 65-72 (GQYSTGKT) form a G1 motif region. 65–72 (GQYSTGKT) contacts ATP. The segment at 91–92 (EP) is G2 motif. The segment at 153–156 (DTPG) is G3 motif. A coiled-coil region spans residues 198–227 (DEFSEVIKALKNHEDKMRVVLNKADQIETQ). The tract at residues 219–222 (NKAD) is G4 motif. Position 220 (Lys-220) interacts with ATP. A region of interest (G5 motif) is located at residue Ile-243. Residue Trp-258 coordinates ATP. Lys-315 is covalently cross-linked (Glycyl lysine isopeptide (Lys-Gly) (interchain with G-Cter in SUMO)). Phosphoserine is present on residues Ser-349 and Ser-456. Residues 444–532 (DKPMYDEIFY…AHLLPPSKRK (89 aa)) form the EH domain. An EF-hand domain is found at 476 to 511 (LPNSVLGKIWKLADIDKDGMLDDEEFALANHLIKVK). 5 residues coordinate Ca(2+): Asp-489, Asp-491, Asp-493, Met-495, and Glu-500. Lys-511 is covalently cross-linked (Glycyl lysine isopeptide (Lys-Gly) (interchain with G-Cter in SUMO)).

The protein belongs to the TRAFAC class dynamin-like GTPase superfamily. Dynamin/Fzo/YdjA family. EHD subfamily. As to quaternary structure, homooligomer, and heterooligomer with EHD1, EHD2 and EHD4, ATP-binding is required for heterooligomerization. Interacts with PACSIN1. Interacts with PACSIN2. Interacts (via EH domain) with MICALL1. Interacts (via EH domain) with RAB11FIP2. Interacts with ANK2. Interacts with CACNA1GG and CACNA1H.

The protein resides in the recycling endosome membrane. It localises to the cell membrane. It is found in the cell projection. The protein localises to the cilium membrane. Functionally, ATP- and membrane-binding protein that controls membrane reorganization/tubulation upon ATP hydrolysis. In vitro causes tubulation of endocytic membranes. Binding to phosphatidic acid induces its membrane tubulation activity. Plays a role in endocytic transport. Involved in early endosome to recycling endosome compartment (ERC), retrograde early endosome to Golgi, and endosome to plasma membrane (rapid recycling) protein transport. Involved in the regulation of Golgi maintenance and morphology. Involved in the recycling of internalized D1 dopamine receptor. Plays a role in cardiac protein trafficking probably implicating ANK2. Involved in the ventricular membrane targeting of SLC8A1 and CACNA1C and probably the atrial membrane localization of CACNA1GG and CACNA1H implicated in the regulation of atrial myocyte excitability and cardiac conduction. In conjunction with EHD4 may be involved in endocytic trafficking of KDR/VEGFR2 implicated in control of glomerular function. Involved in the rapid recycling of integrin beta-3 implicated in cell adhesion maintenance. Involved in the unidirectional retrograde dendritic transport of endocytosed BACE1 and in efficient sorting of BACE1 to axons implicating a function in neuronal APP processing. Plays a role in the formation of the ciliary vesicle, an early step in cilium biogenesis; possibly sharing redundant functions with Ehd1. The protein is EH domain-containing protein 3 of Rattus norvegicus (Rat).